Reading from the N-terminus, the 895-residue chain is Protein translocase subunit SecA (895 aa).

ATP is bound by residues Gln90, Gly108–Ser112, and Asp498.

It belongs to the SecA family.

Its subcellular location is the plastid. The protein resides in the chloroplast stroma. The protein localises to the chloroplast thylakoid membrane. The enzyme catalyses ATP + H2O + cellular proteinSide 1 = ADP + phosphate + cellular proteinSide 2.. Its function is as follows. Has a central role in coupling the hydrolysis of ATP to the transfer of proteins across the thylakoid membrane. This Cyanidium caldarium (Red alga) protein is Protein translocase subunit SecA.